We begin with the raw amino-acid sequence, 298 residues long: MHAAVERFLHSLSGHASPATLDAYRRDLTALARFLEASGIDDWAALDVAQVRRFMGAERTRGLAPRSLARRRAALSRFADHLVRSGILDHNPVALTQTPRQPRHLPRPVDVDQLARFLDTPHDGTPLAVRDQAMLELFYSCGLRLAELTALDVTDLDARRLRVVGKGNKPRQMPIGRRAQAALADWYRLRGQLAGHDEPALFVGQRGARLGHRAVQKRLAQLARERGLAEHLHPHRLRHSFASHLLESSQDLRAVQELLGHANLSTTQVYTRLDWQHLADAYDQAHPRARRRAPPDDT.

One can recognise a Core-binding (CB) domain in the interval 1-83; that stretch reads MHAAVERFLH…ALSRFADHLV (83 aa). The region spanning 104–283 is the Tyr recombinase domain; it reads HLPRPVDVDQ…DWQHLADAYD (180 aa). Residues R144, K166, H235, R238, and H261 contribute to the active site. The active-site O-(3'-phospho-DNA)-tyrosine intermediate is the Y270.

It belongs to the 'phage' integrase family. XerC subfamily. Forms a cyclic heterotetrameric complex composed of two molecules of XerC and two molecules of XerD.

The protein resides in the cytoplasm. Site-specific tyrosine recombinase, which acts by catalyzing the cutting and rejoining of the recombining DNA molecules. The XerC-XerD complex is essential to convert dimers of the bacterial chromosome into monomers to permit their segregation at cell division. It also contributes to the segregational stability of plasmids. This Chromohalobacter salexigens (strain ATCC BAA-138 / DSM 3043 / CIP 106854 / NCIMB 13768 / 1H11) protein is Tyrosine recombinase XerC.